We begin with the raw amino-acid sequence, 344 residues long: Methionine synthase (344 aa).

Residues His-211, Cys-213, Glu-236, and Cys-315 each contribute to the Zn(2+) site.

This sequence belongs to the archaeal MetE family. Zn(2+) serves as cofactor.

Its pathway is amino-acid biosynthesis; L-methionine biosynthesis via de novo pathway. In terms of biological role, catalyzes the transfer of a methyl group to L-homocysteine resulting in methionine formation. The physiological methyl donor is unknown. This Thermoplasma volcanium (strain ATCC 51530 / DSM 4299 / JCM 9571 / NBRC 15438 / GSS1) protein is Methionine synthase.